Reading from the N-terminus, the 76-residue chain is Defensin-like protein 155 (76 aa).

The first 27 residues, 1–27, serve as a signal peptide directing secretion; it reads MAKISCSYLLILMLALSVFSVVEKAKG. Disulfide bonds link cysteine 31-cysteine 76, cysteine 40-cysteine 59, cysteine 45-cysteine 70, and cysteine 49-cysteine 72.

The protein belongs to the DEFL family.

The protein resides in the secreted. The protein is Defensin-like protein 155 (LCR36) of Arabidopsis thaliana (Mouse-ear cress).